A 221-amino-acid polypeptide reads, in one-letter code: Ribosomal RNA large subunit methyltransferase E (221 aa).

Residues G60, W62, D89, D105, and D134 each coordinate S-adenosyl-L-methionine. Residue K174 is the Proton acceptor of the active site. The tract at residues K199 to G221 is disordered.

The protein belongs to the class I-like SAM-binding methyltransferase superfamily. RNA methyltransferase RlmE family.

The protein resides in the cytoplasm. It carries out the reaction uridine(2552) in 23S rRNA + S-adenosyl-L-methionine = 2'-O-methyluridine(2552) in 23S rRNA + S-adenosyl-L-homocysteine + H(+). Its function is as follows. Specifically methylates the uridine in position 2552 of 23S rRNA at the 2'-O position of the ribose in the fully assembled 50S ribosomal subunit. The sequence is that of Ribosomal RNA large subunit methyltransferase E from Ralstonia nicotianae (strain ATCC BAA-1114 / GMI1000) (Ralstonia solanacearum).